The following is a 345-amino-acid chain: Hemin transport protein HmuS (345 aa).

To Y.enterocolitica HemS.

Part of the binding-protein-dependent transport system for hemin. The chain is Hemin transport protein HmuS (hmuS) from Yersinia pestis.